A 98-amino-acid chain; its full sequence is Aspartyl/glutamyl-tRNA(Asn/Gln) amidotransferase subunit C (98 aa).

The protein belongs to the GatC family. As to quaternary structure, heterotrimer of A, B and C subunits.

It catalyses the reaction L-glutamyl-tRNA(Gln) + L-glutamine + ATP + H2O = L-glutaminyl-tRNA(Gln) + L-glutamate + ADP + phosphate + H(+). It carries out the reaction L-aspartyl-tRNA(Asn) + L-glutamine + ATP + H2O = L-asparaginyl-tRNA(Asn) + L-glutamate + ADP + phosphate + 2 H(+). Its function is as follows. Allows the formation of correctly charged Asn-tRNA(Asn) or Gln-tRNA(Gln) through the transamidation of misacylated Asp-tRNA(Asn) or Glu-tRNA(Gln) in organisms which lack either or both of asparaginyl-tRNA or glutaminyl-tRNA synthetases. The reaction takes place in the presence of glutamine and ATP through an activated phospho-Asp-tRNA(Asn) or phospho-Glu-tRNA(Gln). The protein is Aspartyl/glutamyl-tRNA(Asn/Gln) amidotransferase subunit C of Roseiflexus castenholzii (strain DSM 13941 / HLO8).